The primary structure comprises 462 residues: uncharacterized protein (462 aa).

The TRAM domain maps to 12 to 70; the sequence is MLKKNDIIQVAISDLSHEGAGVAKHDGFVFFVDNALPEEVIDMRVLKVNKNSGFGKVEA. S-adenosyl-L-methionine is bound by residues Gln294, Tyr323, Glu344, and Asp392. Cys419 functions as the Nucleophile in the catalytic mechanism.

This sequence belongs to the class I-like SAM-binding methyltransferase superfamily. RNA M5U methyltransferase family.

This is an uncharacterized protein from Streptococcus pyogenes serotype M3 (strain ATCC BAA-595 / MGAS315).